A 69-amino-acid chain; its full sequence is Large ribosomal subunit protein bL31 (69 aa).

Residues Cys-16, Cys-18, Cys-36, and Cys-39 each contribute to the Zn(2+) site.

It belongs to the bacterial ribosomal protein bL31 family. Type A subfamily. As to quaternary structure, part of the 50S ribosomal subunit. The cofactor is Zn(2+).

Its function is as follows. Binds the 23S rRNA. The protein is Large ribosomal subunit protein bL31 of Ruminiclostridium cellulolyticum (strain ATCC 35319 / DSM 5812 / JCM 6584 / H10) (Clostridium cellulolyticum).